The following is a 266-amino-acid chain: Expansin-A13 (266 aa).

The signal sequence occupies residues 1–19 (MQRFLLPLLFLALSPPAIC). An Expansin-like EG45 domain is found at 58-171 (GGACGYGDLV…RRINCRKEGS (114 aa)). One can recognise an Expansin-like CBD domain in the interval 181–260 (IFISVLITNV…NWNYGQTFEG (80 aa)).

The protein belongs to the expansin family. Expansin A subfamily.

The protein resides in the secreted. It is found in the cell wall. Its subcellular location is the membrane. Its function is as follows. Causes loosening and extension of plant cell walls by disrupting non-covalent bonding between cellulose microfibrils and matrix glucans. No enzymatic activity has been found. The sequence is that of Expansin-A13 (EXPA13) from Arabidopsis thaliana (Mouse-ear cress).